We begin with the raw amino-acid sequence, 616 residues long: Chaperone protein HscA (616 aa).

It belongs to the heat shock protein 70 family.

Functionally, chaperone involved in the maturation of iron-sulfur cluster-containing proteins. Has a low intrinsic ATPase activity which is markedly stimulated by HscB. Involved in the maturation of IscU. This Edwardsiella ictaluri (strain 93-146) protein is Chaperone protein HscA.